Here is a 599-residue protein sequence, read N- to C-terminus: Spermatogenesis-associated protein 7 (599 aa).

Residues 163-205 (KSSKVITNGPEKNSSSSPSSVDYAASGPRKLSSGALYGRRPRS) are disordered. Residues 166-175 (KVITNGPEKN) show a composition bias toward polar residues.

As to quaternary structure, found in a complex with CFAP410, NEK1 and SPATA7. Interacts with NEK1. Interacts with RPGRIP1. Interacts with RPGR. Interacts with NPHP4. Interacts with NPHP1. Interacts with AHI1.

It localises to the cytoplasm. Its subcellular location is the cytoskeleton. The protein localises to the cilium axoneme. The protein resides in the cilium basal body. It is found in the cell projection. It localises to the cilium. Its subcellular location is the photoreceptor outer segment. Its function is as follows. Involved in the maintenance of both rod and cone photoreceptor cells. It is required for recruitment and proper localization of RPGRIP1 to the photoreceptor connecting cilium (CC), as well as photoreceptor-specific localization of proximal CC proteins at the distal CC. Maintenance of protein localization at the photoreceptor-specific distal CC is essential for normal microtubule stability and to prevent photoreceptor degeneration. The protein is Spermatogenesis-associated protein 7 (SPATA7) of Homo sapiens (Human).